A 170-amino-acid polypeptide reads, in one-letter code: MQNLQEKASEWSGVETNHAFAIDDTNLFQKLGLQTFINLSTNFYNRVYVDDEEWFRSIFAKSDKDKAIQNQYEFLVQRMGGPPLYSQRRGHPALIARHRPFPVTHEAAERWLLHMQQALDNISDIDHDSKIMLMNFFRHTAYFLVAGVEQKNQSLHPCKDADGRHPCKNF.

Histidine 98 provides a ligand contact to heme b.

Belongs to the truncated hemoglobin family. Group II subfamily. As to quaternary structure, homodimer when ferric.

In terms of biological role, hemoglobin-like protein that exhibits an unusual concentration-independent binding of O(2) and CO. Required for general plant development and during nodulation. May promote shoot organogenesis from root explants. The polypeptide is Group 2 truncated hemoglobin 3-1 (Medicago truncatula (Barrel medic)).